Here is a 276-residue protein sequence, read N- to C-terminus: Cis-2,3-dihydrobiphenyl-2,3-diol dehydrogenase (276 aa).

Position 9 to 33 (9 to 33 (LVTGGGSGLGRAIVDRFVAEGARVA)) interacts with NAD(+). Ser-142 is a substrate binding site. Tyr-155 acts as the Proton acceptor in catalysis.

It belongs to the short-chain dehydrogenases/reductases (SDR) family.

It carries out the reaction (2R,3S)-3-phenylcyclohexa-3,5-diene-1,2-diol + NAD(+) = biphenyl-2,3-diol + NADH + H(+). The protein operates within xenobiotic degradation; biphenyl degradation; 2-hydroxy-2,4-pentadienoate and benzoate from biphenyl: step 2/4. The polypeptide is Cis-2,3-dihydrobiphenyl-2,3-diol dehydrogenase (bphB) (Pseudomonas sp. (strain KKS102)).